The chain runs to 118 residues: MNDLKSKSNIKLMKRVLTTYELRKYLKKYFCLTLDNYLVLAYLDVFKNDEGKYFMRDIISYIGIDQSRIVKSVKDLSKKGYLNKCRDPHDSRNVIIVVSVKQHNYIKNLLSEININET.

The segment at residues 55–78 (MRDIISYIGIDQSRIVKSVKDLSK) is a DNA-binding region (H-T-H motif).

This sequence belongs to the SarA family.

It is found in the cytoplasm. Functionally, transcriptional regulator acting as an intermediary between major regulators sarA and agr and virulence genes. Represses alpha-hemolysin (hla) gene expression. Down-regulates agr RNAIII expression by repressing sarU, a positive activator of agr expression. Up-regulates sarS, which induces the expression of the cell wall-associated protein A (spa). The chain is HTH-type transcriptional regulator SarT (sarT) from Staphylococcus aureus (strain NCTC 8325 / PS 47).